The chain runs to 416 residues: NADH-quinone oxidoreductase subunit D (416 aa).

Belongs to the complex I 49 kDa subunit family. In terms of assembly, NDH-1 is composed of 14 different subunits. Subunits NuoB, C, D, E, F, and G constitute the peripheral sector of the complex.

Its subcellular location is the cell inner membrane. It catalyses the reaction a quinone + NADH + 5 H(+)(in) = a quinol + NAD(+) + 4 H(+)(out). In terms of biological role, NDH-1 shuttles electrons from NADH, via FMN and iron-sulfur (Fe-S) centers, to quinones in the respiratory chain. The immediate electron acceptor for the enzyme in this species is believed to be ubiquinone. Couples the redox reaction to proton translocation (for every two electrons transferred, four hydrogen ions are translocated across the cytoplasmic membrane), and thus conserves the redox energy in a proton gradient. This Caulobacter sp. (strain K31) protein is NADH-quinone oxidoreductase subunit D.